The sequence spans 410 residues: Probable serine/threonine-protein kinase PBL9 (410 aa).

The N-myristoyl glycine moiety is linked to residue G2. C4 is lipidated: S-palmitoyl cysteine. The tract at residues 11 to 46 is disordered; that stretch reads AESSGASTKYDAKDIGSLGSKASSVSVRPSPRTEGE. A Protein kinase domain is found at 68–352; the sequence is FRPDSVLGEG…MSEVVSHLEH (285 aa). Residues 74-82 and K106 each bind ATP; that span reads LGEGGFGCV. Y151 is modified (phosphotyrosine). Residue D203 is the Proton acceptor of the active site. A phosphoserine mark is found at S207 and S237. A phosphothreonine mark is found at T238 and T243. Y251 carries the post-translational modification Phosphotyrosine.

The protein belongs to the protein kinase superfamily. Ser/Thr protein kinase family. In terms of assembly, interacts with the Xanthomonas campestris effector XopAC/AvrAC. In terms of tissue distribution, expressed in stomatal guard cells of leaves.

The protein localises to the cell membrane. The enzyme catalyses L-seryl-[protein] + ATP = O-phospho-L-seryl-[protein] + ADP + H(+). It catalyses the reaction L-threonyl-[protein] + ATP = O-phospho-L-threonyl-[protein] + ADP + H(+). Its function is as follows. Possible bi-functional kinase. In vitro, it exhibits serine/threonine activity. In vivo, can phosphorylate tyrosine residues of limited substrates. May be involved in plant defense signaling. The polypeptide is Probable serine/threonine-protein kinase PBL9 (Arabidopsis thaliana (Mouse-ear cress)).